Here is a 392-residue protein sequence, read N- to C-terminus: 6-aminohexanoate-dimer hydrolase (392 aa).

The tract at residues 1-27 (MNTPTTGSHPARYPSAAAGEPTLDSWQ) is disordered. S112 is an active-site residue.

The catalysed reaction is [N-(6-aminohexanoyl)](n) + H2O = [N-(6-aminohexanoyl)](n-1) + 6-aminohexanoate. The enzyme catalyses N-(6-aminohexanoyl)-6-aminohexanoate + H2O = 2 6-aminohexanoate. Its pathway is xenobiotic degradation; nylon-6 oligomer degradation. Involved in nylon oligomer degradation. The chain is 6-aminohexanoate-dimer hydrolase from Paenarthrobacter ureafaciens.